A 599-amino-acid polypeptide reads, in one-letter code: Aspartate--tRNA(Asp/Asn) ligase (599 aa).

Position 174 (glutamate 174) interacts with L-aspartate. An aspartate region spans residues 198–201 (QLFK). Arginine 220 contacts L-aspartate. ATP is bound by residues 220 to 222 (RDE) and glutamine 229. Position 457 (histidine 457) interacts with L-aspartate. Glutamate 491 contributes to the ATP binding site. Arginine 498 is an L-aspartate binding site. An ATP-binding site is contributed by 543–546 (GLDR).

Belongs to the class-II aminoacyl-tRNA synthetase family. Type 1 subfamily. As to quaternary structure, homodimer.

It is found in the cytoplasm. The catalysed reaction is tRNA(Asx) + L-aspartate + ATP = L-aspartyl-tRNA(Asx) + AMP + diphosphate. In terms of biological role, aspartyl-tRNA synthetase with relaxed tRNA specificity since it is able to aspartylate not only its cognate tRNA(Asp) but also tRNA(Asn). Reaction proceeds in two steps: L-aspartate is first activated by ATP to form Asp-AMP and then transferred to the acceptor end of tRNA(Asp/Asn). This is Aspartate--tRNA(Asp/Asn) ligase from Paraburkholderia xenovorans (strain LB400).